Reading from the N-terminus, the 218-residue chain is NAD(P)H-quinone oxidoreductase subunit I (218 aa).

4Fe-4S ferredoxin-type domains lie at 55-84 and 95-124; these read GRIH…VDWV and RNYS…MTEE. [4Fe-4S] cluster contacts are provided by C64, C67, C70, C74, C104, C107, C110, and C114. The interval 192-218 is disordered; that stretch reads LSLQQDSLQGDEGESLQDAPDQDQPKG.

The protein belongs to the complex I 23 kDa subunit family. As to quaternary structure, NDH-1 is composed of at least 11 different subunits. It depends on [4Fe-4S] cluster as a cofactor.

It localises to the cellular thylakoid membrane. It carries out the reaction a plastoquinone + NADH + (n+1) H(+)(in) = a plastoquinol + NAD(+) + n H(+)(out). The enzyme catalyses a plastoquinone + NADPH + (n+1) H(+)(in) = a plastoquinol + NADP(+) + n H(+)(out). In terms of biological role, NDH-1 shuttles electrons from an unknown electron donor, via FMN and iron-sulfur (Fe-S) centers, to quinones in the respiratory and/or the photosynthetic chain. The immediate electron acceptor for the enzyme in this species is believed to be plastoquinone. Couples the redox reaction to proton translocation, and thus conserves the redox energy in a proton gradient. The sequence is that of NAD(P)H-quinone oxidoreductase subunit I from Prochlorococcus marinus (strain MIT 9303).